A 501-amino-acid chain; its full sequence is Pyruvate kinase 1 (501 aa).

R50 provides a ligand contact to substrate. K(+) contacts are provided by N52, S54, D85, and T86. 52–55 contacts ATP; the sequence is NFSH. ATP contacts are provided by R92 and K178. E243 contributes to the Mg(2+) binding site. Substrate is bound by residues G266, D267, and T299. Residue D267 participates in Mg(2+) binding.

It belongs to the pyruvate kinase family. Homotetramer. The cofactor is Mg(2+). K(+) serves as cofactor.

It carries out the reaction pyruvate + ATP = phosphoenolpyruvate + ADP + H(+). Its pathway is carbohydrate degradation; glycolysis; pyruvate from D-glyceraldehyde 3-phosphate: step 5/5. In Candida glabrata (strain ATCC 2001 / BCRC 20586 / JCM 3761 / NBRC 0622 / NRRL Y-65 / CBS 138) (Yeast), this protein is Pyruvate kinase 1 (PYK1).